The primary structure comprises 119 residues: Small ribosomal subunit protein bS6 (119 aa).

A disordered region spans residues 96 to 119 (VTEPSPLARSQEKDEEEGGRTAEA).

This sequence belongs to the bacterial ribosomal protein bS6 family.

Binds together with bS18 to 16S ribosomal RNA. The protein is Small ribosomal subunit protein bS6 of Alkalilimnicola ehrlichii (strain ATCC BAA-1101 / DSM 17681 / MLHE-1).